The chain runs to 145 residues: Histone H3-like centromeric protein A (145 aa).

Positions 1–19 (MPRHTSAHKRKPSTPRRRS) are enriched in basic residues. A disordered region spans residues 1 to 54 (MPRHTSAHKRKPSTPRRRSPPASLPPPAGSRTRRHSGPSGSSPRKKHKFRPGTR). Serine 19 bears the Phosphoserine mark. Residues 51–145 (PGTRALMEIR…ARRIRGVEHM (95 aa)) form an H3-like region.

Belongs to the histone H3 family. As to quaternary structure, component of centromeric nucleosomes, where DNA is wrapped around a histone octamer core. The octamer contains two molecules each of H2A, H2B, CENPA and H4 assembled in one CENPA-H4 heterotetramer and two H2A-H2B heterodimers. CENPA modulates the DNA-binding characteristics of nucleosomes so that protruding DNA ends have higher flexibility than in nucleosomes containing conventional histone H3.

It is found in the nucleus. Its subcellular location is the chromosome. The protein resides in the centromere. Functionally, histone H3-like nucleosomal protein that is specifically found in centromeric nucleosomes. Replaces conventional H3 in the nucleosome core of centromeric chromatin that serves as an assembly site for the inner kinetochore. The presence of CENPA subtly modifies the nucleosome structure and the way DNA is wrapped around the nucleosome and gives rise to protruding DNA ends that are less well-ordered and rigid compared to nucleosomes containing histone H3. May serve as an epigenetic mark that propagates centromere identity through replication and cell division. Required for recruitment and assembly of kinetochore proteins, and as a consequence required for progress through mitosis, chromosome segregation and cytokinesis. This is Histone H3-like centromeric protein A (cenpa) from Danio rerio (Zebrafish).